A 945-amino-acid polypeptide reads, in one-letter code: Soluble guanylate cyclase gcy-33 (945 aa).

Histidine 104 provides a ligand contact to heme. Residues 388–413 are a coiled coil; the sequence is SEVLTEMTREISEAKKTARTLLTQMM. One can recognise a Guanylate cyclase domain in the interval 437–567; sequence SIGFIRVCDF…DTVNTASRME (131 aa). Disordered stretches follow at residues 639–679 and 706–930; these read KEAE…LSGS and QDEN…KCED. Residues 661 to 679 are compositionally biased toward low complexity; that stretch reads SLGESIDSSSSRRGSLSGS. Residues 711-720 are compositionally biased toward polar residues; the sequence is RPPTWSASHS. Over residues 721 to 731 the composition is skewed to basic and acidic residues; sequence QDIRKPRKTES. A compositionally biased stretch (polar residues) spans 732–744; it reads KITLNSRLSSSDL. Basic and acidic residues-rich tracts occupy residues 750–759 and 766–804; these read ETSKDSDGET and ELKE…DHVS. The stretch at 763–802 forms a coiled coil; it reads TSSELKEVNRIREEALAQEKEEERTTKEENQKIEEVGEDH. Positions 817-828 are enriched in polar residues; the sequence is GDNNISFSQMPS. Residues 851-861 show a composition bias toward basic and acidic residues; it reads ISKKKLEKEDS. The segment covering 862–884 has biased composition (polar residues); it reads NSSMSSLDERTTVSAKPTTTRRL. Residues 886 to 896 are compositionally biased toward basic and acidic residues; that stretch reads NQKDLEKEKKR. Residues 898–911 show a composition bias toward low complexity; sequence SMAGSSVTSSSAHS. Residues 916 to 930 show a composition bias toward basic and acidic residues; that stretch reads SKKDTRDKSRCKCED.

Belongs to the adenylyl cyclase class-4/guanylyl cyclase family. In terms of assembly, heterodimer; with other soluble guanylate cyclases. Requires heme as cofactor. In terms of tissue distribution, expressed in BAG sensory neuron.

It localises to the cytoplasm. It carries out the reaction GTP = 3',5'-cyclic GMP + diphosphate. May be regulated by molecular oxygen. Probably not activated by nitric oxide (NO). Synthesizes cyclic GMP (cGMP) from GTP. May be involved in sensitivity to quinine by regulating egl-4 activity through the production of cGMP. This is Soluble guanylate cyclase gcy-33 (gcy-33) from Caenorhabditis elegans.